The primary structure comprises 108 residues: Hydrogenase expression/formation protein HupN (108 aa).

The interval 88–108 (REPQLPPHLQAQLPPKEPNSP) is disordered.

It belongs to the HupF/HypC family.

The chain is Hydrogenase expression/formation protein HupN (hupN) from Azotobacter chroococcum mcd 1.